We begin with the raw amino-acid sequence, 171 residues long: ATP synthase subunit b (171 aa).

Residues 12-34 traverse the membrane as a helical segment; sequence FALNLNLFETNVINLAVVAFGLY.

This sequence belongs to the ATPase B chain family. In terms of assembly, F-type ATPases have 2 components, F(1) - the catalytic core - and F(0) - the membrane proton channel. F(1) has five subunits: alpha(3), beta(3), gamma(1), delta(1), epsilon(1). F(0) has four main subunits: a(1), b(1), b'(1) and c(10-14). The alpha and beta chains form an alternating ring which encloses part of the gamma chain. F(1) is attached to F(0) by a central stalk formed by the gamma and epsilon chains, while a peripheral stalk is formed by the delta, b and b' chains.

It is found in the cellular thylakoid membrane. F(1)F(0) ATP synthase produces ATP from ADP in the presence of a proton or sodium gradient. F-type ATPases consist of two structural domains, F(1) containing the extramembraneous catalytic core and F(0) containing the membrane proton channel, linked together by a central stalk and a peripheral stalk. During catalysis, ATP synthesis in the catalytic domain of F(1) is coupled via a rotary mechanism of the central stalk subunits to proton translocation. Its function is as follows. Component of the F(0) channel, it forms part of the peripheral stalk, linking F(1) to F(0). This is ATP synthase subunit b from Prochlorococcus marinus (strain SARG / CCMP1375 / SS120).